A 370-amino-acid polypeptide reads, in one-letter code: tRNA-specific 2-thiouridylase MnmA (370 aa).

ATP is bound by residues 9–16 (GMSGGVDS) and Met-35. The tract at residues 95-97 (NPD) is interaction with target base in tRNA. The active-site Nucleophile is Cys-100. The cysteines at positions 100 and 196 are disulfide-linked. Gly-124 provides a ligand contact to ATP. Residues 146–148 (KDQ) are interaction with tRNA. The Cysteine persulfide intermediate role is filled by Cys-196. Positions 308-309 (RY) are interaction with tRNA.

The protein belongs to the MnmA/TRMU family.

It localises to the cytoplasm. It carries out the reaction S-sulfanyl-L-cysteinyl-[protein] + uridine(34) in tRNA + AH2 + ATP = 2-thiouridine(34) in tRNA + L-cysteinyl-[protein] + A + AMP + diphosphate + H(+). In terms of biological role, catalyzes the 2-thiolation of uridine at the wobble position (U34) of tRNA, leading to the formation of s(2)U34. This Ralstonia pickettii (strain 12J) protein is tRNA-specific 2-thiouridylase MnmA.